The sequence spans 149 residues: UPF0260 protein Pfl01_1392 (149 aa).

This sequence belongs to the UPF0260 family.

The protein is UPF0260 protein Pfl01_1392 of Pseudomonas fluorescens (strain Pf0-1).